The primary structure comprises 351 residues: Phosphate acyltransferase (351 aa).

This sequence belongs to the PlsX family. Homodimer. Probably interacts with PlsY.

It is found in the cytoplasm. The catalysed reaction is a fatty acyl-[ACP] + phosphate = an acyl phosphate + holo-[ACP]. The protein operates within lipid metabolism; phospholipid metabolism. Catalyzes the reversible formation of acyl-phosphate (acyl-PO(4)) from acyl-[acyl-carrier-protein] (acyl-ACP). This enzyme utilizes acyl-ACP as fatty acyl donor, but not acyl-CoA. In Paramagnetospirillum magneticum (strain ATCC 700264 / AMB-1) (Magnetospirillum magneticum), this protein is Phosphate acyltransferase.